Reading from the N-terminus, the 485-residue chain is Probable coniferyl aldehyde dehydrogenase (485 aa).

Active-site residues include E226 and C260.

This sequence belongs to the aldehyde dehydrogenase family.

The catalysed reaction is (E)-coniferaldehyde + NADP(+) + H2O = (E)-ferulate + NADPH + 2 H(+). It carries out the reaction (E)-coniferaldehyde + NAD(+) + H2O = (E)-ferulate + NADH + 2 H(+). The polypeptide is Probable coniferyl aldehyde dehydrogenase (calB) (Caulobacter vibrioides (strain ATCC 19089 / CIP 103742 / CB 15) (Caulobacter crescentus)).